Here is a 287-residue protein sequence, read N- to C-terminus: Glutamate racemase (287 aa).

Substrate-binding positions include aspartate 32–serine 33 and tyrosine 64–glycine 65. The active-site Proton donor/acceptor is cysteine 96. Asparagine 97 to threonine 98 contacts substrate. Cysteine 208 (proton donor/acceptor) is an active-site residue. A substrate-binding site is contributed by threonine 209–histidine 210.

This sequence belongs to the aspartate/glutamate racemases family.

It catalyses the reaction L-glutamate = D-glutamate. It functions in the pathway cell wall biogenesis; peptidoglycan biosynthesis. Its function is as follows. Provides the (R)-glutamate required for cell wall biosynthesis. This chain is Glutamate racemase, found in Serratia proteamaculans (strain 568).